The following is a 622-amino-acid chain: Low affinity potassium transport system protein Kup (622 aa).

Transmembrane regions (helical) follow at residues 9 to 29 (LPAITLAAIGVVYGDIGTSPL), 49 to 69 (VFGFLSLIFWLLIFVVSIKYL), 103 to 123 (VIMGLIGGSFFYGEVVITPAI), 137 to 157 (PQLDTWIVPLSIIVLTLLFMI), 165 to 185 (VGKLFAPIMLTWFLILAGLGL), 213 to 233 (VSFIALGAVVLSITGVEALYA), 247 to 267 (WFTVVLPSLTLNYFGQGALLL), 276 to 296 (PFFLLAPDWALIPLLIIAALA), 337 to 357 (IYIPFVNWMLYVAVVIVIVSF), 363 to 383 (LAAAYGIAVTGTMVLTSILST), 396 to 416 (FVALILIAFLCVDIPLFTANL), and 419 to 439 (LLSGGWLPLSLGTVMFIVMTT).

Belongs to the HAK/KUP transporter (TC 2.A.72) family.

The protein resides in the cell inner membrane. The enzyme catalyses K(+)(in) + H(+)(in) = K(+)(out) + H(+)(out). In terms of biological role, responsible for the low-affinity transport of potassium into the cell. Likely operates as a K(+):H(+) symporter. The protein is Low affinity potassium transport system protein Kup of Escherichia coli (strain K12 / MC4100 / BW2952).